The chain runs to 206 residues: Small ribosomal subunit protein uS4 (206 aa).

Positions Gly-96–Lys-156 constitute an S4 RNA-binding domain.

The protein belongs to the universal ribosomal protein uS4 family. Part of the 30S ribosomal subunit. Contacts protein S5. The interaction surface between S4 and S5 is involved in control of translational fidelity.

One of the primary rRNA binding proteins, it binds directly to 16S rRNA where it nucleates assembly of the body of the 30S subunit. In terms of biological role, with S5 and S12 plays an important role in translational accuracy. The chain is Small ribosomal subunit protein uS4 from Shigella flexneri.